Here is a 115-residue protein sequence, read N- to C-terminus: MDIIKKIERENMRLDVPAFRSGDTVKVHLRIVEGEKQRIQIFQGNVIRVKRGTTCATFTVRKISDGVGVERIFPLNSPFIDRVEVVTQGRVRRSRLYYLRALKGKAARIKPRGRF.

It belongs to the bacterial ribosomal protein bL19 family.

Functionally, this protein is located at the 30S-50S ribosomal subunit interface and may play a role in the structure and function of the aminoacyl-tRNA binding site. This Desulfovibrio desulfuricans (strain ATCC 27774 / DSM 6949 / MB) protein is Large ribosomal subunit protein bL19.